The sequence spans 288 residues: Pirin-like protein CC_3178 (288 aa).

It belongs to the pirin family.

This is Pirin-like protein CC_3178 from Caulobacter vibrioides (strain ATCC 19089 / CIP 103742 / CB 15) (Caulobacter crescentus).